The chain runs to 115 residues: U3-lycotoxin-Ls1k (115 aa).

The signal sequence occupies residues 1-20 (MKFVLLFGVLLVALFSYSSA). The propeptide occupies 21 to 44 (EMLDDFGQADEDELLSLIEKEEAR). Cystine bridges form between Cys48–Cys63, Cys55–Cys72, Cys62–Cys87, and Cys74–Cys85.

This sequence belongs to the neurotoxin 19 (CSTX) family. 01 subfamily. Expressed by the venom gland.

The protein resides in the secreted. The chain is U3-lycotoxin-Ls1k from Lycosa singoriensis (Wolf spider).